Reading from the N-terminus, the 101-residue chain is Small ribosomal subunit protein uS10 (101 aa).

Belongs to the universal ribosomal protein uS10 family. In terms of assembly, part of the 30S ribosomal subunit.

In terms of biological role, involved in the binding of tRNA to the ribosomes. The polypeptide is Small ribosomal subunit protein uS10 (Porphyromonas gingivalis (strain ATCC 33277 / DSM 20709 / CIP 103683 / JCM 12257 / NCTC 11834 / 2561)).